The sequence spans 321 residues: 2-oxoglutarate-dependent dioxygenase frbH (321 aa).

Residues 77–97 (SRNSDTHGYEPVATSTGAQDD) form a disordered region. In terms of domain architecture, Fe2OG dioxygenase spans 169–273 (ESLSTLSMFR…RFSIAYFLRA (105 aa)). His-194, Asp-196, and His-251 together coordinate Fe cation. Position 264 (Arg-264) interacts with 2-oxoglutarate.

It belongs to the iron/ascorbate-dependent oxidoreductase family.

It participates in antifungal biosynthesis. Functionally, 2-oxoglutarate-dependent dioxygenase; part of the gene cluster that mediates the biosynthesis of the antifungal antibiotic FR901469, an inhibitor of beta-1,3-glucansynthase, exerting antifungal activity against the pathogenes Candida albicans and Aspergillus fumigatus. FR901469 is a cyclic depsipeptide containing 12 amino acid residues and a fatty acid chain. The NRPS frbI contains 12 modules responsible for the formation of the depsipeptide backbone which is denoted as Acyl-Thr-Ala-Tyr-Val-4OHPro-Thr-Thr-3OHPro-threo3OHGln-Gly-Thr-Orn-OH (C71H116N14O23). The PKS frbB is probably involved in the production of the hydrocarbon chain, and the acyl-CoA ligase frbC might be involved in the transport of the chain to the peptide ptoduct of frbI. Because FR901469 contains 3 hydroxylated amino acid residues, the 3 oxygenases frbA, frbH, and frbJ might be participating in amino acid hydroxylation. As no thioesterase domains were detected in frbI or frbB, the thioesterases frbD and frbE may instead release and cyclize the products of the NRPS and PKS, respectively. The polypeptide is 2-oxoglutarate-dependent dioxygenase frbH (Dothideomycetidae sp. (strain 11243) (Fungal sp. (strain No.11243))).